An 83-amino-acid polypeptide reads, in one-letter code: Normal mucosa of esophagus-specific gene 1 protein (83 aa).

It belongs to the complex I NDUFA4 subunit family.

It is found in the nucleus. The protein is Normal mucosa of esophagus-specific gene 1 protein (Nmes1) of Rattus norvegicus (Rat).